The primary structure comprises 152 residues: uncharacterized protein (152 aa).

A helical transmembrane segment spans residues 12-34; that stretch reads ALLYLGGGLLAMIYGLITFFMAF.

It to B.subtilis YfjD.

The protein resides in the membrane. This is an uncharacterized protein from Bacillus subtilis (strain 168).